A 606-amino-acid chain; its full sequence is R-linalool synthase, chloroplastic (606 aa).

Residues 1–51 (MCTIISVNHHHVAILSKPKVKLFHTKNKRSASINLPWSLSPSSSAASRPIS) constitute a chloroplast transit peptide. Arg326, Asp363, Asp367, Arg504, and Asp507 together coordinate (2E)-geranyl diphosphate. The Mg(2+) site is built by Asp363 and Asp367. A DDXXD motif motif is present at residues 363-367 (DDVYD). Mg(2+) contacts are provided by Asp507, Thr511, and Glu515.

Belongs to the terpene synthase family. Tpsb subfamily. Mg(2+) serves as cofactor. It depends on Mn(2+) as a cofactor.

The protein localises to the plastid. It is found in the chloroplast. The enzyme catalyses (2E)-geranyl diphosphate + H2O = (R)-linalool + diphosphate. It functions in the pathway secondary metabolite biosynthesis; terpenoid biosynthesis. Its function is as follows. Monoterpene synthase that catalyzes the formation of (3R)-linalool from geranyl diphosphate, but not from farnesyl diphosphate or geranylgeranyl diphosphate. The sequence is that of R-linalool synthase, chloroplastic from Mentha aquatica (Water mint).